A 566-amino-acid polypeptide reads, in one-letter code: Chondroitin sulfate proteoglycan 5 (566 aa).

Residues 1–30 (MGRAGGGGPGRGPPPLLLFLGAALVLASGA) form the signal peptide. Over 31–423 (VPAREAGSAV…SIITDFQVMC (393 aa)) the chain is Extracellular. S38 is a glycosylation site (O-linked (Xyl...) (chondroitin sulfate) serine). The tract at residues 39–82 (AVEAEELVKGSPAWEPPANDTREEAGPPAAGEDEASWTAPGGEL) is disordered. N57 is a glycosylation site (N-linked (GlcNAc...) asparagine). O-linked (Xyl...) (chondroitin sulfate) serine glycosylation occurs at S117. Disordered stretches follow at residues 143–202 (IPEA…LEPQ), 215–248 (GLDG…TPSW), and 262–354 (ESDF…ASSE). Residue S165 is glycosylated (O-linked (GalNAc...) serine). Residues 264–301 (DFYPTTSFYDDLDEEEEEEEDDKDAVGGGDLEDENELL) are interaction with TNC and TNR. Residues 273–286 (DDLDEEEEEEEDDK) show a composition bias toward acidic residues. One can recognise an EGF-like domain in the interval 371-413 (RSVCDLFPSYCHNGGQCYLVENIGAFCRCNTQDYIWHKGMRCE). 3 disulfide bridges follow: C374/C387, C381/C397, and C399/C412. A helical transmembrane segment spans residues 424-444 (VAVGSAALVLLLLFMMTVFFA). The tract at residues 442-460 (FFAKKLYLLKTENTKLRRT) is interaction with GOPC. At 445–566 (KKLYLLKTEN…DVNCLQNNLT (122 aa)) the chain is on the cytoplasmic side. Residues S467, S475, S483, and S543 each carry the phosphoserine modification.

Binds TNR and probably TNC. Interacts with ERBB3 and GOPC. Interacts with MDK; this interaction is independent of the presence of chondroitin sulfate chains and promotes elongation of oligodendroglial precursor-like cells. Post-translationally, N-glycosylated. In terms of processing, O-glycosylated; contains chondroitin sulfate glycans. Part-time proteoglycan, expressed in part as a proteoglycan exhibiting chondroitin sulfate glycans and in part as a non-proteoglycan form. The relative amount of both forms depends on tissues and tissue maturation. Phosphorylated; in intracellular and extracellular parts. Detected in cerebrospinal fluid (at protein level). Detected in urine (at protein level). Expressed in brain (at protein level).

The protein localises to the cell membrane. It localises to the synaptic cell membrane. The protein resides in the endoplasmic reticulum membrane. It is found in the golgi apparatus membrane. Its subcellular location is the cell surface. The protein localises to the secreted. Its function is as follows. May function as a growth and differentiation factor involved in neuritogenesis. May induce ERBB3 activation. The polypeptide is Chondroitin sulfate proteoglycan 5 (CSPG5) (Homo sapiens (Human)).